Reading from the N-terminus, the 393-residue chain is Arginine biosynthesis bifunctional protein ArgJ (393 aa).

The substrate site is built by Thr142, Lys168, Thr179, Glu265, Asn388, and Ser393. Thr179 acts as the Nucleophile in catalysis.

Belongs to the ArgJ family. As to quaternary structure, heterotetramer of two alpha and two beta chains.

It localises to the cytoplasm. It carries out the reaction N(2)-acetyl-L-ornithine + L-glutamate = N-acetyl-L-glutamate + L-ornithine. It catalyses the reaction L-glutamate + acetyl-CoA = N-acetyl-L-glutamate + CoA + H(+). Its pathway is amino-acid biosynthesis; L-arginine biosynthesis; L-ornithine and N-acetyl-L-glutamate from L-glutamate and N(2)-acetyl-L-ornithine (cyclic): step 1/1. It functions in the pathway amino-acid biosynthesis; L-arginine biosynthesis; N(2)-acetyl-L-ornithine from L-glutamate: step 1/4. Its function is as follows. Catalyzes two activities which are involved in the cyclic version of arginine biosynthesis: the synthesis of N-acetylglutamate from glutamate and acetyl-CoA as the acetyl donor, and of ornithine by transacetylation between N(2)-acetylornithine and glutamate. This Desulfotalea psychrophila (strain LSv54 / DSM 12343) protein is Arginine biosynthesis bifunctional protein ArgJ.